Reading from the N-terminus, the 377-residue chain is 2-aminoethylphosphonate--pyruvate transaminase (377 aa).

Position 194 is an N6-(pyridoxal phosphate)lysine (lysine 194).

This sequence belongs to the class-V pyridoxal-phosphate-dependent aminotransferase family. PhnW subfamily. As to quaternary structure, homodimer. Requires pyridoxal 5'-phosphate as cofactor.

It carries out the reaction (2-aminoethyl)phosphonate + pyruvate = phosphonoacetaldehyde + L-alanine. Involved in phosphonate degradation. This Cupriavidus necator (strain ATCC 17699 / DSM 428 / KCTC 22496 / NCIMB 10442 / H16 / Stanier 337) (Ralstonia eutropha) protein is 2-aminoethylphosphonate--pyruvate transaminase.